Here is a 398-residue protein sequence, read N- to C-terminus: 1-deoxy-D-xylulose 5-phosphate reductoisomerase (398 aa).

Residues threonine 10, glycine 11, serine 12, isoleucine 13, and asparagine 124 each contribute to the NADPH site. Lysine 125 serves as a coordination point for 1-deoxy-D-xylulose 5-phosphate. Glutamate 126 contributes to the NADPH binding site. Aspartate 150 is a binding site for Mn(2+). Residues serine 151, glutamate 152, serine 186, and histidine 209 each contribute to the 1-deoxy-D-xylulose 5-phosphate site. Glutamate 152 is a binding site for Mn(2+). NADPH is bound at residue glycine 215. 4 residues coordinate 1-deoxy-D-xylulose 5-phosphate: serine 222, asparagine 227, lysine 228, and glutamate 231. Glutamate 231 serves as a coordination point for Mn(2+).

This sequence belongs to the DXR family. Mg(2+) serves as cofactor. It depends on Mn(2+) as a cofactor.

It catalyses the reaction 2-C-methyl-D-erythritol 4-phosphate + NADP(+) = 1-deoxy-D-xylulose 5-phosphate + NADPH + H(+). Its pathway is isoprenoid biosynthesis; isopentenyl diphosphate biosynthesis via DXP pathway; isopentenyl diphosphate from 1-deoxy-D-xylulose 5-phosphate: step 1/6. Its function is as follows. Catalyzes the NADPH-dependent rearrangement and reduction of 1-deoxy-D-xylulose-5-phosphate (DXP) to 2-C-methyl-D-erythritol 4-phosphate (MEP). The protein is 1-deoxy-D-xylulose 5-phosphate reductoisomerase of Tolumonas auensis (strain DSM 9187 / NBRC 110442 / TA 4).